Consider the following 553-residue polypeptide: Glutamyl-tRNA(Gln) amidotransferase subunit B, mitochondrial (553 aa).

The transit peptide at 1–18 directs the protein to the mitochondrion; the sequence is MAASTSGYSGVLFRLRKY.

This sequence belongs to the GatB/GatE family. GatB subfamily. As to quaternary structure, subunit of the heterotrimeric GatCAB amidotransferase (AdT) complex, composed of A (qrsl1), B (gatb) and C (gatc) subunits.

The protein localises to the mitochondrion. The enzyme catalyses L-glutamyl-tRNA(Gln) + L-glutamine + ATP + H2O = L-glutaminyl-tRNA(Gln) + L-glutamate + ADP + phosphate + H(+). Functionally, allows the formation of correctly charged Gln-tRNA(Gln) through the transamidation of misacylated Glu-tRNA(Gln) in the mitochondria. The reaction takes place in the presence of glutamine and ATP through an activated gamma-phospho-Glu-tRNA(Gln). This chain is Glutamyl-tRNA(Gln) amidotransferase subunit B, mitochondrial, found in Danio rerio (Zebrafish).